The following is a 428-amino-acid chain: Histidine--tRNA ligase (428 aa).

Belongs to the class-II aminoacyl-tRNA synthetase family. In terms of assembly, homodimer.

The protein resides in the cytoplasm. The enzyme catalyses tRNA(His) + L-histidine + ATP = L-histidyl-tRNA(His) + AMP + diphosphate + H(+). The polypeptide is Histidine--tRNA ligase (Bordetella pertussis (strain Tohama I / ATCC BAA-589 / NCTC 13251)).